The sequence spans 367 residues: 5-amino-6-(D-ribitylamino)uracil--L-tyrosine 4-hydroxyphenyl transferase (367 aa).

The 235-residue stretch at 56-290 folds into the Radical SAM core domain; the sequence is VTYVRNQNIN…MFAVARLFLD (235 aa). [4Fe-4S] cluster is bound by residues Cys-70, Cys-74, and Cys-77.

This sequence belongs to the radical SAM superfamily. CofH family. Consists of two subunits, CofG and CofH. The cofactor is [4Fe-4S] cluster.

The enzyme catalyses 5-amino-6-(D-ribitylamino)uracil + L-tyrosine + S-adenosyl-L-methionine = 5-amino-5-(4-hydroxybenzyl)-6-(D-ribitylimino)-5,6-dihydrouracil + 2-iminoacetate + 5'-deoxyadenosine + L-methionine + H(+). It participates in cofactor biosynthesis; coenzyme F0 biosynthesis. In terms of biological role, catalyzes the radical-mediated synthesis of 5-amino-5-(4-hydroxybenzyl)-6-(D-ribitylimino)-5,6-dihydrouracil from 5-amino-6-(D-ribitylamino)uracil and L-tyrosine. This chain is 5-amino-6-(D-ribitylamino)uracil--L-tyrosine 4-hydroxyphenyl transferase, found in Methanoculleus marisnigri (strain ATCC 35101 / DSM 1498 / JR1).